A 698-amino-acid chain; its full sequence is Elongation factor G (698 aa).

Residues 10-285 form the tr-type G domain; it reads AGTRNIGIMA…AVVDFLPNPL (276 aa). GTP contacts are provided by residues 19–26, 83–87, and 137–140; these read AHIDAGKT, DTPGH, and NKMD.

Belongs to the TRAFAC class translation factor GTPase superfamily. Classic translation factor GTPase family. EF-G/EF-2 subfamily.

It is found in the cytoplasm. Its function is as follows. Catalyzes the GTP-dependent ribosomal translocation step during translation elongation. During this step, the ribosome changes from the pre-translocational (PRE) to the post-translocational (POST) state as the newly formed A-site-bound peptidyl-tRNA and P-site-bound deacylated tRNA move to the P and E sites, respectively. Catalyzes the coordinated movement of the two tRNA molecules, the mRNA and conformational changes in the ribosome. This chain is Elongation factor G, found in Frankia casuarinae (strain DSM 45818 / CECT 9043 / HFP020203 / CcI3).